The sequence spans 92 residues: MNDHTPDRYVTFLGIDCDAKADRMMEMLSARLASTDSPWVRYFEQKLAEKARMATDNLHFVGSQINSLYSFFEEAEDEEGLDLLWHLEHNCC.

The protein belongs to the CowN family.

Is required to sustain N(2)-dependent growth in the presence of low levels of carbon monoxide (CO). Probably acts by protecting the N(2) fixation ability of the nitrogenase complex, which is inactivated in the presence of CO. This is N(2)-fixation sustaining protein CowN from Cereibacter sphaeroides (strain ATCC 17025 / ATH 2.4.3) (Rhodobacter sphaeroides).